A 329-amino-acid chain; its full sequence is GTPase Obg (329 aa).

Positions Y2–V160 constitute an Obg domain. The OBG-type G domain maps to A161–K327. GTP contacts are provided by residues G167–S174, F192–I196, D213–G216, N280–D283, and S308–Y310. The Mg(2+) site is built by S174 and T194.

It belongs to the TRAFAC class OBG-HflX-like GTPase superfamily. OBG GTPase family. As to quaternary structure, monomer. Mg(2+) is required as a cofactor.

Its subcellular location is the cytoplasm. Functionally, an essential GTPase which binds GTP, GDP and possibly (p)ppGpp with moderate affinity, with high nucleotide exchange rates and a fairly low GTP hydrolysis rate. Plays a role in control of the cell cycle, stress response, ribosome biogenesis and in those bacteria that undergo differentiation, in morphogenesis control. The protein is GTPase Obg of Borrelia garinii subsp. bavariensis (strain ATCC BAA-2496 / DSM 23469 / PBi) (Borreliella bavariensis).